We begin with the raw amino-acid sequence, 290 residues long: Syntaxin-1A (290 aa).

The interval 1–21 (MTKDRLAALQAAQSDDEDMPE) is disordered. The Cytoplasmic portion of the chain corresponds to 1–267 (MTKDRLAALQ…KYQSKARRKK (267 aa)). Residues 194 to 256 (LADIEARHAD…QTATQDTKKA (63 aa)) enclose the t-SNARE coiled-coil homology domain. The chain crosses the membrane as a helical; Anchor for type IV membrane protein span at residues 268–289 (IWIAICVLIAIIILVVFLAIYL). Position 290 (T290) is a topological domain, vesicular.

This sequence belongs to the syntaxin family. Post-translationally, (Microbial infection) Targeted and hydrolyzed by the light chain (LC) of P.bifermentans PMP1. Cleavage probably inhibits neurotransmitter release.

It localises to the cytoplasmic vesicle. The protein localises to the secretory vesicle. Its subcellular location is the synaptic vesicle membrane. Functionally, plays a critical role in several secretory processes. The sequence is that of Syntaxin-1A from Anopheles gambiae (African malaria mosquito).